The chain runs to 332 residues: Fructose-1,6-bisphosphatase class 1 (332 aa).

Glu-94, Asp-116, Leu-118, and Asp-119 together coordinate Mg(2+). Substrate-binding positions include 119-122 (DGSS), Asn-211, Tyr-239, 257-259 (YLY), and Lys-269. Glu-275 serves as a coordination point for Mg(2+).

This sequence belongs to the FBPase class 1 family. In terms of assembly, homotetramer. It depends on Mg(2+) as a cofactor.

The protein localises to the cytoplasm. The enzyme catalyses beta-D-fructose 1,6-bisphosphate + H2O = beta-D-fructose 6-phosphate + phosphate. It participates in carbohydrate biosynthesis; Calvin cycle. The protein is Fructose-1,6-bisphosphatase class 1 of Synechococcus sp. (strain JA-2-3B'a(2-13)) (Cyanobacteria bacterium Yellowstone B-Prime).